A 71-amino-acid polypeptide reads, in one-letter code: Transcription modulator YdgT (71 aa).

This sequence belongs to the Hha/YmoA/Cnu family. Forms complexes with both H-NS and StpA.

In terms of biological role, binds to H-NS and modified the range of genes it silences; H-NS alonge silences core gene while the H-NS-Hha complex (and presumably also H-NS-YdgT) silences genes acquired by horizontal gene transfer. Plays a role silencing virulence factors in the absence of factors that induce pathogenicity. The complex formed with H-NS binds to the specific 26-bp cnb site in the origin of replication oriC. The sequence is that of Transcription modulator YdgT (ydgT) from Salmonella choleraesuis (strain SC-B67).